Consider the following 1379-residue polypeptide: DNA-directed RNA polymerase subunit beta (1379 aa).

It belongs to the RNA polymerase beta chain family. As to quaternary structure, the RNAP catalytic core consists of 2 alpha, 1 beta, 1 beta' and 1 omega subunit. When a sigma factor is associated with the core the holoenzyme is formed, which can initiate transcription.

It catalyses the reaction RNA(n) + a ribonucleoside 5'-triphosphate = RNA(n+1) + diphosphate. DNA-dependent RNA polymerase catalyzes the transcription of DNA into RNA using the four ribonucleoside triphosphates as substrates. The chain is DNA-directed RNA polymerase subunit beta from Rhizobium leguminosarum bv. trifolii (strain WSM2304).